The primary structure comprises 542 residues: MARYVFITGGVVSSLGKGIAAAALAALLQARGYRVRIRKLDPYLNVDPGTMSPYQHGEVFVTDDGAETDLDLGHYERFTGRPANQQDNITTGRIYRNIIEKERRGDYLGATVQVIPHVTDEIKNFVLEGNEDYDFVLCEIGGTVGDIEAMPFLEAIRQLGNELPRGTAVYIHLTLMPYIPAAGELKTKPTQHSVKELRSIGIAPDILLVRADREIPESERRKLSLFCNVRESAVIQALDVATIYDVPIAYHKEGLDSEVLSAFGIDPAPKPRMDRWEEVSNRLHNPEGEVTIAIVGKYTGLKDAYKSLIEALYHGGLANKVKVNLDWIEAEVFESEDPAPYLEKVHGILVPGGFGERGAEGKILAAKFARERKVPYFGICFGMQMACIEAARNLVGIENASSTEFGPTKEPVVGLMTEWLKGNMLEKRASAGDLGGTMRLGAYEAALKSGSKIAEIYGSTDISERHRHRYEVNIDYKERLESAGLNFAGMSPDGVLPETVEYPDHPWFIGVQYHPELKSRPFEPHPLFASFIEAAIEQSRLV.

Residues 1-265 (MARYVFITGG…DSEVLSAFGI (265 aa)) are amidoligase domain. S13 contacts CTP. S13 provides a ligand contact to UTP. An ATP-binding site is contributed by 14–19 (SLGKGI). Y54 is an L-glutamine binding site. Residue D71 participates in ATP binding. Mg(2+) is bound by residues D71 and E139. CTP is bound by residues 146–148 (DIE), 186–191 (KTKPTQ), and K222. UTP is bound by residues 186-191 (KTKPTQ) and K222. Positions 291-541 (TIAIVGKYTG…IEAAIEQSRL (251 aa)) constitute a Glutamine amidotransferase type-1 domain. G353 provides a ligand contact to L-glutamine. The Nucleophile; for glutamine hydrolysis role is filled by C380. L-glutamine-binding positions include 381-384 (FGMQ), E404, and R469. Residues H514 and E516 contribute to the active site.

It belongs to the CTP synthase family. In terms of assembly, homotetramer.

It catalyses the reaction UTP + L-glutamine + ATP + H2O = CTP + L-glutamate + ADP + phosphate + 2 H(+). The catalysed reaction is L-glutamine + H2O = L-glutamate + NH4(+). The enzyme catalyses UTP + NH4(+) + ATP = CTP + ADP + phosphate + 2 H(+). It functions in the pathway pyrimidine metabolism; CTP biosynthesis via de novo pathway; CTP from UDP: step 2/2. Its activity is regulated as follows. Allosterically activated by GTP, when glutamine is the substrate; GTP has no effect on the reaction when ammonia is the substrate. The allosteric effector GTP functions by stabilizing the protein conformation that binds the tetrahedral intermediate(s) formed during glutamine hydrolysis. Inhibited by the product CTP, via allosteric rather than competitive inhibition. Its function is as follows. Catalyzes the ATP-dependent amination of UTP to CTP with either L-glutamine or ammonia as the source of nitrogen. Regulates intracellular CTP levels through interactions with the four ribonucleotide triphosphates. This chain is CTP synthase, found in Brucella anthropi (strain ATCC 49188 / DSM 6882 / CCUG 24695 / JCM 21032 / LMG 3331 / NBRC 15819 / NCTC 12168 / Alc 37) (Ochrobactrum anthropi).